We begin with the raw amino-acid sequence, 943 residues long: Protein translocase subunit SecA (943 aa).

ATP-binding positions include glutamine 77, 95-99, and aspartate 484; that span reads GEGKT.

Belongs to the SecA family. In terms of assembly, monomer and homodimer. Part of the essential Sec protein translocation apparatus which comprises SecA, SecYEG and auxiliary proteins SecDF. Other proteins may also be involved.

Its subcellular location is the cell membrane. It is found in the cytoplasm. It carries out the reaction ATP + H2O + cellular proteinSide 1 = ADP + phosphate + cellular proteinSide 2.. Its function is as follows. Part of the Sec protein translocase complex. Interacts with the SecYEG preprotein conducting channel. Has a central role in coupling the hydrolysis of ATP to the transfer of proteins into and across the cell membrane, serving as an ATP-driven molecular motor driving the stepwise translocation of polypeptide chains across the membrane. This chain is Protein translocase subunit SecA, found in Mesoplasma florum (strain ATCC 33453 / NBRC 100688 / NCTC 11704 / L1) (Acholeplasma florum).